Reading from the N-terminus, the 283-residue chain is Protein/nucleic acid deglycase HchA (283 aa).

Zn(2+)-binding residues include His86, Glu91, and His123. Cys185 (nucleophile) is an active-site residue.

This sequence belongs to the peptidase C56 family. HchA subfamily. In terms of assembly, homodimer.

The protein resides in the cytoplasm. It carries out the reaction N(omega)-(1-hydroxy-2-oxopropyl)-L-arginyl-[protein] + H2O = lactate + L-arginyl-[protein] + H(+). The catalysed reaction is N(6)-(1-hydroxy-2-oxopropyl)-L-lysyl-[protein] + H2O = lactate + L-lysyl-[protein] + H(+). The enzyme catalyses S-(1-hydroxy-2-oxopropyl)-L-cysteinyl-[protein] + H2O = lactate + L-cysteinyl-[protein] + H(+). It catalyses the reaction N(omega)-(1-hydroxy-2-oxoethyl)-L-arginyl-[protein] + H2O = L-arginyl-[protein] + glycolate + H(+). It carries out the reaction N(6)-(1-hydroxy-2-oxoethyl)-L-lysyl-[protein] + H2O = glycolate + L-lysyl-[protein] + H(+). The catalysed reaction is S-(1-hydroxy-2-oxoethyl)-L-cysteinyl-[protein] + H2O = glycolate + L-cysteinyl-[protein] + H(+). The enzyme catalyses N(2)-(1-hydroxy-2-oxopropyl)-dGTP + H2O = lactate + dGTP + H(+). It catalyses the reaction N(2)-(1-hydroxy-2-oxopropyl)-GTP + H2O = lactate + GTP + H(+). It carries out the reaction N(2)-(1-hydroxy-2-oxopropyl)-GDP + H2O = lactate + GDP + H(+). The catalysed reaction is N(2)-(1-hydroxy-2-oxopropyl)-GMP + H2O = lactate + GMP + H(+). The enzyme catalyses N(2)-(1-hydroxy-2-oxoethyl)-dGTP + H2O = dGTP + glycolate + H(+). It catalyses the reaction N(2)-(1-hydroxy-2-oxoethyl)-GTP + H2O = glycolate + GTP + H(+). It carries out the reaction N(2)-(1-hydroxy-2-oxoethyl)-GDP + H2O = glycolate + GDP + H(+). The catalysed reaction is N(2)-(1-hydroxy-2-oxoethyl)-GMP + H2O = glycolate + GMP + H(+). The enzyme catalyses an N(2)-(1-hydroxy-2-oxopropyl)-guanosine in RNA + H2O = a guanosine in RNA + lactate + H(+). It catalyses the reaction an N(2)-(1-hydroxy-2-oxopropyl)-2'-deoxyguanosine in DNA + H2O = a 2'-deoxyguanosine in DNA + lactate + H(+). It carries out the reaction an N(2)-(1-hydroxy-2-oxoethyl)-guanosine in RNA + H2O = a guanosine in RNA + glycolate + H(+). The catalysed reaction is an N(2)-(1-hydroxy-2-oxoethyl)-2'-deoxyguanosine in DNA + H2O = a 2'-deoxyguanosine in DNA + glycolate + H(+). Functionally, protein and nucleotide deglycase that catalyzes the deglycation of the Maillard adducts formed between amino groups of proteins or nucleotides and reactive carbonyl groups of glyoxals. Thus, functions as a protein deglycase that repairs methylglyoxal- and glyoxal-glycated proteins, and releases repaired proteins and lactate or glycolate, respectively. Deglycates cysteine, arginine and lysine residues in proteins, and thus reactivates these proteins by reversing glycation by glyoxals. Acts on early glycation intermediates (hemithioacetals and aminocarbinols), preventing the formation of Schiff bases and advanced glycation endproducts (AGE). Also functions as a nucleotide deglycase able to repair glycated guanine in the free nucleotide pool (GTP, GDP, GMP, dGTP) and in DNA and RNA. Is thus involved in a major nucleotide repair system named guanine glycation repair (GG repair), dedicated to reversing methylglyoxal and glyoxal damage via nucleotide sanitization and direct nucleic acid repair. Plays an important role in protecting cells from carbonyl stress. This is Protein/nucleic acid deglycase HchA from Escherichia coli O157:H7.